We begin with the raw amino-acid sequence, 78 residues long: Large ribosomal subunit protein uL29 (78 aa).

Belongs to the universal ribosomal protein uL29 family.

The chain is Large ribosomal subunit protein uL29 from Rippkaea orientalis (strain PCC 8801 / RF-1) (Cyanothece sp. (strain PCC 8801)).